Here is a 90-residue protein sequence, read N- to C-terminus: Small ribosomal subunit protein uS15c (90 aa).

Belongs to the universal ribosomal protein uS15 family. As to quaternary structure, part of the 30S ribosomal subunit.

The protein resides in the plastid. It localises to the chloroplast. The protein is Small ribosomal subunit protein uS15c (rps15-A) of Oryza nivara (Indian wild rice).